Here is a 482-residue protein sequence, read N- to C-terminus: NADH-quinone oxidoreductase subunit D (482 aa).

Low complexity predominate over residues 1–16; it reads MTTNTSTSSTTDDLTT. Residues 1–48 form a disordered region; the sequence is MTTNTSTSSTTDDLTTGAPNGTGAPDGANGVGGPTGTVGGPGEHPAYE. Residues 29–42 show a composition bias toward gly residues; that stretch reads NGVGGPTGTVGGPG.

It belongs to the complex I 49 kDa subunit family. As to quaternary structure, NDH-1 is composed of 14 different subunits. Subunits NuoB, C, D, E, F, and G constitute the peripheral sector of the complex.

Its subcellular location is the cell membrane. The enzyme catalyses a quinone + NADH + 5 H(+)(in) = a quinol + NAD(+) + 4 H(+)(out). Functionally, NDH-1 shuttles electrons from NADH, via FMN and iron-sulfur (Fe-S) centers, to quinones in the respiratory chain. The immediate electron acceptor for the enzyme in this species is believed to be a menaquinone. Couples the redox reaction to proton translocation (for every two electrons transferred, four hydrogen ions are translocated across the cytoplasmic membrane), and thus conserves the redox energy in a proton gradient. The protein is NADH-quinone oxidoreductase subunit D of Frankia casuarinae (strain DSM 45818 / CECT 9043 / HFP020203 / CcI3).